A 420-amino-acid chain; its full sequence is UDP-N-acetylmuramoylalanine--D-glutamate ligase (420 aa).

109–115 (GSVGKST) serves as a coordination point for ATP.

The protein belongs to the MurCDEF family.

The protein localises to the cytoplasm. It catalyses the reaction UDP-N-acetyl-alpha-D-muramoyl-L-alanine + D-glutamate + ATP = UDP-N-acetyl-alpha-D-muramoyl-L-alanyl-D-glutamate + ADP + phosphate + H(+). It functions in the pathway cell wall biogenesis; peptidoglycan biosynthesis. Its function is as follows. Cell wall formation. Catalyzes the addition of glutamate to the nucleotide precursor UDP-N-acetylmuramoyl-L-alanine (UMA). The sequence is that of UDP-N-acetylmuramoylalanine--D-glutamate ligase from Fervidobacterium nodosum (strain ATCC 35602 / DSM 5306 / Rt17-B1).